The primary structure comprises 138 residues: Ribulose bisphosphate carboxylase small subunit (138 aa).

Belongs to the RuBisCO small chain family. As to quaternary structure, heterohexadecamer of 8 large and 8 small subunits.

The protein localises to the plastid. The protein resides in the chloroplast. Functionally, ruBisCO catalyzes two reactions: the carboxylation of D-ribulose 1,5-bisphosphate, the primary event in carbon dioxide fixation, as well as the oxidative fragmentation of the pentose substrate in the photorespiration process. Both reactions occur simultaneously and in competition at the same active site. Although the small subunit is not catalytic it is essential for maximal activity. This Pyropia dentata (Red alga) protein is Ribulose bisphosphate carboxylase small subunit.